The sequence spans 380 residues: Protein Wnt-5a (380 aa).

The signal sequence occupies residues 1–37; that stretch reads MKKPIGILSPGVALGTAGGAMSSKFFLMALATFFSFA. A propeptide spanning residues 38–61 is cleaved from the precursor; sequence QVVIEANSWWSLGMNNPVQMSEVH. Cysteine 104 and cysteine 115 form a disulfide bridge. Asparagine 114 and asparagine 120 each carry an N-linked (GlcNAc...) asparagine glycan. Cystine bridges form between cysteine 154/cysteine 162, cysteine 164/cysteine 182, cysteine 238/cysteine 252, cysteine 240/cysteine 247, cysteine 309/cysteine 340, cysteine 325/cysteine 335, cysteine 339/cysteine 379, cysteine 355/cysteine 370, cysteine 357/cysteine 367, and cysteine 362/cysteine 363. A lipid anchor (O-palmitoleoyl serine; by PORCN) is attached at serine 244. Residues asparagine 312 and asparagine 326 are each glycosylated (N-linked (GlcNAc...) asparagine).

The protein belongs to the Wnt family. In terms of assembly, forms a soluble 1:1 complex with AFM; this prevents oligomerization and is required for prolonged biological activity. The complex with AFM may represent the physiological form in body fluids. Homooligomer; disulfide-linked, leading to inactivation (in vitro). Interacts with PORCN. Interacts with WLS. Interacts with glypican GCP3. Interacts with PKD1 (via extracellular domain). Interacts with TMEM67. Glycosylation is necessary for secretion but not for activity. In terms of processing, palmitoleoylation is required for efficient binding to frizzled receptors. Depalmitoleoylation leads to Wnt signaling pathway inhibition. Post-translationally, proteolytic processing by TIKI1 and TIKI2 promotes oxidation and formation of large disulfide-bond oligomers, leading to inactivation of WNT5A.

The protein resides in the secreted. The protein localises to the extracellular space. It is found in the extracellular matrix. Functionally, ligand for members of the frizzled family of seven transmembrane receptors. Can activate or inhibit canonical Wnt signaling, depending on receptor context. In the presence of FZD4, activates beta-catenin signaling. In the presence of ROR2, inhibits the canonical Wnt pathway by promoting beta-catenin degradation through a GSK3-independent pathway which involves down-regulation of beta-catenin-induced reporter gene expression. Suppression of the canonical pathway allows chondrogenesis to occur and inhibits tumor formation. Stimulates cell migration. Decreases proliferation, migration, invasiveness and clonogenicity of carcinoma cells and may act as a tumor suppressor. Mediates motility of melanoma cells. Required during embryogenesis for extension of the primary anterior-posterior axis and for outgrowth of limbs and the genital tubercle. Inhibits type II collagen expression in chondrocytes. The sequence is that of Protein Wnt-5a (Wnt5a) from Rattus norvegicus (Rat).